We begin with the raw amino-acid sequence, 913 residues long: Alanine--tRNA ligase (913 aa).

Zn(2+) is bound by residues histidine 608, histidine 612, cysteine 711, and histidine 715.

Belongs to the class-II aminoacyl-tRNA synthetase family. Zn(2+) serves as cofactor.

It is found in the cytoplasm. The enzyme catalyses tRNA(Ala) + L-alanine + ATP = L-alanyl-tRNA(Ala) + AMP + diphosphate. Catalyzes the attachment of alanine to tRNA(Ala) in a two-step reaction: alanine is first activated by ATP to form Ala-AMP and then transferred to the acceptor end of tRNA(Ala). Also edits incorrectly charged Ser-tRNA(Ala) and Gly-tRNA(Ala) via its editing domain. The sequence is that of Alanine--tRNA ligase from Methanocorpusculum labreanum (strain ATCC 43576 / DSM 4855 / Z).